The following is a 120-amino-acid chain: MSHRPERVAEAIKKEVADLIRNDIKDPRIGFVTITGVEVTRDLSFAKIFISVMGSDAHRQETLSILQKSAGYMRSEIGRRIKLRHAPELIFKLDTSLDHGTRIAEILHEINSQEAKPTHE.

It belongs to the RbfA family. In terms of assembly, monomer. Binds 30S ribosomal subunits, but not 50S ribosomal subunits or 70S ribosomes.

The protein resides in the cytoplasm. One of several proteins that assist in the late maturation steps of the functional core of the 30S ribosomal subunit. Associates with free 30S ribosomal subunits (but not with 30S subunits that are part of 70S ribosomes or polysomes). Required for efficient processing of 16S rRNA. May interact with the 5'-terminal helix region of 16S rRNA. In Desulforamulus reducens (strain ATCC BAA-1160 / DSM 100696 / MI-1) (Desulfotomaculum reducens), this protein is Ribosome-binding factor A.